We begin with the raw amino-acid sequence, 229 residues long: MSFEISVEEIDELIETGNLNIDYALKELGATSQPPPNRPLSQISKTEENNDETRTSKNSASAEAPAHASSPLRSHNEESEPGKQSSDGFSMISNRPQTGMLLMGSDTQSPSPSKTYQGLILDAKKRALNEPRRNQKTTNEHGNTNDTWIFKRGEYSHQERGLGYTESEIKNTIFIPRHRREHSISWVNGRTTISEWCNPCCAPVKSIASVEKCTCGRCPKICELCIRDP.

Positions 28 to 115 (LGATSQPPPN…DTQSPSPSKT (88 aa)) are disordered. Basic and acidic residues predominate over residues 45 to 55 (KTEENNDETRT). Positions 59–71 (SASAEAPAHASSP) are enriched in low complexity. 2 stretches are compositionally biased toward polar residues: residues 82–97 (GKQS…NRPQ) and 105–115 (SDTQSPSPSKT). Residues His-178, Cys-197, Cys-201, Cys-213, Cys-215, Cys-218, Cys-222, and Cys-225 each contribute to the Zn(2+) site.

It belongs to the paramyxoviruses V protein family.

Functionally, blocks host interferon signaling. This is Non-structural protein V (P/V) from Human parainfluenza 4b virus (strain 68-333) (HPIV-4b).